The following is an 813-amino-acid chain: Striatin-interacting protein 1 homolog (813 aa).

Disordered regions lie at residues 1–41 (MDGV…SEAP) and 307–379 (RAAS…RDEV). Residues 9-18 (NNKQKQNQML) show a composition bias toward polar residues. Residues 22–35 (MRGEFTRNQRKDSE) show a composition bias toward basic and acidic residues. The segment covering 307–316 (RAASPPASAS) has biased composition (low complexity). Ser-310 carries the post-translational modification Phosphoserine. Over residues 331–352 (KALIKQDNLDTFNEKDPYKADD) the composition is skewed to basic and acidic residues. A compositionally biased stretch (acidic residues) spans 353-367 (SHEDEEENDDNDNSL).

It belongs to the STRIP family. In terms of assembly, part of the core of STRIPAK complexes composed of PP2A catalytic and scaffolding subunits, the striatins (PP2A regulatory subunits), the striatin-associated proteins MOB4, STRIP1 and STRIP2, PDCD10 and members of the STE20 kinases, such as STK24 and STK26.

The protein resides in the cytoplasm. Functionally, plays a role in the regulation of cell morphology and cytoskeletal organization. Required in the cortical actin filament dynamics and cell shape. Part of the striatin-interacting phosphatase and kinase (STRIPAK) complexes. STRIPAK complexes have critical roles in protein (de)phosphorylation and are regulators of multiple signaling pathways including Hippo, MAPK, nuclear receptor and cytoskeleton remodeling. Different types of STRIPAK complexes are involved in a variety of biological processes such as cell growth, differentiation, apoptosis, metabolism and immune regulation. The sequence is that of Striatin-interacting protein 1 homolog (strip1) from Danio rerio (Zebrafish).